We begin with the raw amino-acid sequence, 1359 residues long: Transcriptional regulator ATRX homolog (1359 aa).

Residues 1–402 form a disordered region; that stretch reads MRVGVSESED…RAEKERRKRL (402 aa). A compositionally biased stretch (basic and acidic residues) spans 11–49; that stretch reads SDGHVIEDEDLEMARQIENERKEKRAQKLKEKREREGKP. Positions 50-61 are enriched in basic residues; it reads PPKKRPAKKRKA. Residues 64–73 are compositionally biased toward acidic residues; sequence SEEDDDDEEE. Composition is skewed to basic residues over residues 77–86, 103–123, 139–149, 165–177, 194–204, and 219–229; these read KSSKKSRKRA, KSKSKKKVDQKKKEKSKKKRT, KSKKKSKKTKK, VKKSKKNKEKSVK, KKSKKGLKKKA, and KKSKKKSKKVV. Acidic residues predominate over residues 257 to 271; the sequence is ESSESEKSDEEEEEK. A compositionally biased stretch (basic and acidic residues) spans 321–336; the sequence is KDQKSESEASDVEEKV. Residues 347–357 are compositionally biased toward low complexity; sequence SESGSDSSEGS. A compositionally biased stretch (basic residues) spans 362–376; the sequence is RKSKKKEKPEKKKKG. Positions 383 to 397 are enriched in basic and acidic residues; it reads KLQKETIDAERAEKE. Positions 483–685 constitute a Helicase ATP-binding domain; it reads DRLDTEGSGG…HCMVNFVKPG (203 aa). Position 496–503 (496–503) interacts with ATP; sequence HCMGLGKT. Positions 636–639 match the DEAH box motif; the sequence is DEAH. The tract at residues 809–891 is disordered; that stretch reads RVMREDAEEE…NSDDEDEEDG (83 aa). Residues 814–832 are compositionally biased toward acidic residues; that stretch reads DAEEEADFIDDGDGSESES. Positions 833-847 are enriched in low complexity; sequence EGSFKSGSESDSGKS. In terms of domain architecture, Helicase C-terminal spans 951–1134; it reads LLVEIIKKCE…EAQIQRHYLG (184 aa).

The protein belongs to the SNF2/RAD54 helicase family.

The protein resides in the nucleus. The catalysed reaction is ATP + H2O = ADP + phosphate + H(+). Its function is as follows. Required for embryonic development and gonadogenesis. Also, functions redundantly with the transcriptional repressor lin-35 to regulate somatic gonad development. The chain is Transcriptional regulator ATRX homolog from Caenorhabditis elegans.